A 428-amino-acid polypeptide reads, in one-letter code: 3-phosphoshikimate 1-carboxyvinyltransferase (428 aa).

Residues Lys20, Ser21, and Arg25 each contribute to the 3-phosphoshikimate site. Lys20 is a phosphoenolpyruvate binding site. Phosphoenolpyruvate contacts are provided by Gly92 and Arg120. 3-phosphoshikimate contacts are provided by Ser166, Gln168, Asp314, and Lys341. Gln168 contributes to the phosphoenolpyruvate binding site. Asp314 serves as the catalytic Proton acceptor. Phosphoenolpyruvate is bound by residues Arg345 and Arg387.

This sequence belongs to the EPSP synthase family. As to quaternary structure, monomer.

The protein resides in the cytoplasm. The catalysed reaction is 3-phosphoshikimate + phosphoenolpyruvate = 5-O-(1-carboxyvinyl)-3-phosphoshikimate + phosphate. Its pathway is metabolic intermediate biosynthesis; chorismate biosynthesis; chorismate from D-erythrose 4-phosphate and phosphoenolpyruvate: step 6/7. Catalyzes the transfer of the enolpyruvyl moiety of phosphoenolpyruvate (PEP) to the 5-hydroxyl of shikimate-3-phosphate (S3P) to produce enolpyruvyl shikimate-3-phosphate and inorganic phosphate. The polypeptide is 3-phosphoshikimate 1-carboxyvinyltransferase (Listeria monocytogenes serotype 4a (strain HCC23)).